The following is a 123-amino-acid chain: Galanin peptides (123 aa).

Residues 1 to 19 (MARGSALLLASLLLAAALS) form the signal peptide. Residues 20-30 (ASAGLWSPAKE) constitute a propeptide that is removed on maturation. Residues 46 to 80 (HAVGNHRSFSDKNGLTSKRELRPEDDMKPGSFDRS) are disordered. The span at 62–73 (SKRELRPEDDMK) shows a compositional bias: basic and acidic residues. A phosphoserine mark is found at Ser-116 and Ser-117.

The protein belongs to the galanin family.

It localises to the secreted. Functionally, endocrine hormone of the central and peripheral nervous systems that binds and activates the G protein-coupled receptors GALR1, GALR2, and GALR3. This small neuropeptide may regulate diverse physiologic functions including contraction of smooth muscle of the gastrointestinal and genitourinary tract, growth hormone and insulin release and adrenal secretion. This Homo sapiens (Human) protein is Galanin peptides (GAL).